Reading from the N-terminus, the 503-residue chain is ATP synthase subunit alpha (503 aa).

Residue 170-177 (GDRQTGKT) coordinates ATP.

It belongs to the ATPase alpha/beta chains family. F-type ATPases have 2 components, CF(1) - the catalytic core - and CF(0) - the membrane proton channel. CF(1) has five subunits: alpha(3), beta(3), gamma(1), delta(1), epsilon(1). CF(0) has three main subunits: a(1), b(2) and c(9-12). The alpha and beta chains form an alternating ring which encloses part of the gamma chain. CF(1) is attached to CF(0) by a central stalk formed by the gamma and epsilon chains, while a peripheral stalk is formed by the delta and b chains.

It is found in the cell inner membrane. The enzyme catalyses ATP + H2O + 4 H(+)(in) = ADP + phosphate + 5 H(+)(out). Produces ATP from ADP in the presence of a proton gradient across the membrane. The alpha chain is a regulatory subunit. This is ATP synthase subunit alpha from Thermotoga maritima (strain ATCC 43589 / DSM 3109 / JCM 10099 / NBRC 100826 / MSB8).